A 445-amino-acid chain; its full sequence is MRLSRYFLPVLKENPSEAQIVSHRYMLRAGMIKQQAAGIYSWLPLGFKVLKRIEQIVHEEQIRAGHIPLLMPTLQPADLWRESGRYDDYGEEMLRITDRHKRDMLYGPTNEEMITDIFRSHVSSYKDLPLTLYHIQWKFRDEIRPRFGVMRGREFLMKDGYNFDLDYESAIHAYNRHMVSYLRTYERMGLQAIPMRAASGPIGGDNTHEFLVLASTGESEVFYDAAITDLKFGDRVVNYDDRAECEAIVKEWTAPYARTDETHDEAVFGQIPEERRRSSRGIEVGQIFYFGTKYSEPMGANVVTADGSRVPVHMGSHGIGVSRLLGAIIEASHDDKGIIWPEGVTPFHAGIVNLKQGDSSTDLACEALYRDLSARGLEPLYDDRDERAGAKFATMDLIGLPWRITVGPRGISAGKVELTNRRTGESEEMSSGAAVDRLAQIYAGI.

The protein belongs to the class-II aminoacyl-tRNA synthetase family. ProS type 2 subfamily. In terms of assembly, homodimer.

It is found in the cytoplasm. The enzyme catalyses tRNA(Pro) + L-proline + ATP = L-prolyl-tRNA(Pro) + AMP + diphosphate. Functionally, catalyzes the attachment of proline to tRNA(Pro) in a two-step reaction: proline is first activated by ATP to form Pro-AMP and then transferred to the acceptor end of tRNA(Pro). The polypeptide is Proline--tRNA ligase (Cereibacter sphaeroides (strain ATCC 17023 / DSM 158 / JCM 6121 / CCUG 31486 / LMG 2827 / NBRC 12203 / NCIMB 8253 / ATH 2.4.1.) (Rhodobacter sphaeroides)).